We begin with the raw amino-acid sequence, 65 residues long: Venom protein Vn4.6 (65 aa).

An N-terminal signal peptide occupies residues 1–23 (MSKIILAIFLIVLCGLIFVTVDA).

Post-translationally, contains 2 disulfide bonds. As to expression, expressed by the venom gland.

It localises to the secreted. Its function is as follows. Endoparasitoid venom protein that interferes with the activation of host hemolymph prophenoloxidase. May act in conjunction with other venom proteins (such as Vn50), by competitive binding to the zymogen and thereby interrupting the enzyme. The chain is Venom protein Vn4.6 from Cotesia rubecula (Cabbage white butterfly parasite).